Reading from the N-terminus, the 329-residue chain is Lipoyl synthase (329 aa).

[4Fe-4S] cluster is bound by residues cysteine 55, cysteine 60, cysteine 66, cysteine 81, cysteine 85, cysteine 88, and serine 292. Positions 67-281 (WEDREATFLI…KAEAEAIGFL (215 aa)) constitute a Radical SAM core domain.

It belongs to the radical SAM superfamily. Lipoyl synthase family. The cofactor is [4Fe-4S] cluster.

The protein resides in the cytoplasm. It catalyses the reaction [[Fe-S] cluster scaffold protein carrying a second [4Fe-4S](2+) cluster] + N(6)-octanoyl-L-lysyl-[protein] + 2 oxidized [2Fe-2S]-[ferredoxin] + 2 S-adenosyl-L-methionine + 4 H(+) = [[Fe-S] cluster scaffold protein] + N(6)-[(R)-dihydrolipoyl]-L-lysyl-[protein] + 4 Fe(3+) + 2 hydrogen sulfide + 2 5'-deoxyadenosine + 2 L-methionine + 2 reduced [2Fe-2S]-[ferredoxin]. It functions in the pathway protein modification; protein lipoylation via endogenous pathway; protein N(6)-(lipoyl)lysine from octanoyl-[acyl-carrier-protein]: step 2/2. Catalyzes the radical-mediated insertion of two sulfur atoms into the C-6 and C-8 positions of the octanoyl moiety bound to the lipoyl domains of lipoate-dependent enzymes, thereby converting the octanoylated domains into lipoylated derivatives. In Clavibacter sepedonicus (Clavibacter michiganensis subsp. sepedonicus), this protein is Lipoyl synthase.